The primary structure comprises 1086 residues: Receptor-type guanylate cyclase gcy-6 (1086 aa).

The N-terminal stretch at 1 to 21 (MIGVYLRSVIFPLLFVIQTIC) is a signal peptide. Residues 22-487 (QPPGNVFHLG…PANVFFQYIG (466 aa)) are Extracellular-facing. N-linked (GlcNAc...) asparagine glycosylation is found at asparagine 325, asparagine 343, asparagine 387, and asparagine 427. The chain crosses the membrane as a helical span at residues 488 to 508 (WFIAAIIIIFFTIMGAILAFI). The Cytoplasmic segment spans residues 509–1086 (YLCHAKQQEV…APKILKKKQD (578 aa)). The 277-residue stretch at 560 to 836 (SSTLSEVGET…NDNLMDHVFN (277 aa)) folds into the Protein kinase domain. ATP contacts are provided by residues 566-574 (VGETRNYLF) and lysine 589. In terms of domain architecture, Guanylate cyclase spans 894-1024 (TLFFSDVVSF…DAVNTASRME (131 aa)).

Belongs to the adenylyl cyclase class-4/guanylyl cyclase family. In terms of tissue distribution, expressed in both ASEL and ASER neurons throughout late embryonic and early larval stages. In adults, expressed asymmetrically in ASE left (ASEL) sensory neuron.

The protein localises to the cell membrane. The enzyme catalyses GTP = 3',5'-cyclic GMP + diphosphate. Functionally, guanylate cyclase involved in the production of the second messenger cGMP. Regulates chemotaxis responses toward the salt ion Mg(2+) and to a lesser extent toward Cl(1-) in ASE left (ASEL) sensory neuron. The chain is Receptor-type guanylate cyclase gcy-6 from Caenorhabditis elegans.